A 213-amino-acid chain; its full sequence is Ribosomal RNA large subunit methyltransferase E (213 aa).

Residues Gly68, Trp70, Asp88, Asp104, and Asp127 each contribute to the S-adenosyl-L-methionine site. Lys167 functions as the Proton acceptor in the catalytic mechanism.

The protein belongs to the class I-like SAM-binding methyltransferase superfamily. RNA methyltransferase RlmE family.

Its subcellular location is the cytoplasm. The catalysed reaction is uridine(2552) in 23S rRNA + S-adenosyl-L-methionine = 2'-O-methyluridine(2552) in 23S rRNA + S-adenosyl-L-homocysteine + H(+). Its function is as follows. Specifically methylates the uridine in position 2552 of 23S rRNA at the 2'-O position of the ribose in the fully assembled 50S ribosomal subunit. This Neorickettsia sennetsu (strain ATCC VR-367 / Miyayama) (Ehrlichia sennetsu) protein is Ribosomal RNA large subunit methyltransferase E.